A 276-amino-acid chain; its full sequence is Diaminopimelate epimerase (276 aa).

Substrate-binding residues include N13, Q46, and N66. C75 serves as the catalytic Proton donor. Substrate contacts are provided by residues 76 to 77 (GN), N159, N192, and 210 to 211 (ER). C219 acts as the Proton acceptor in catalysis. 220–221 (GT) contacts substrate.

Belongs to the diaminopimelate epimerase family. Homodimer.

Its subcellular location is the cytoplasm. It catalyses the reaction (2S,6S)-2,6-diaminopimelate = meso-2,6-diaminopimelate. It functions in the pathway amino-acid biosynthesis; L-lysine biosynthesis via DAP pathway; DL-2,6-diaminopimelate from LL-2,6-diaminopimelate: step 1/1. Functionally, catalyzes the stereoinversion of LL-2,6-diaminopimelate (L,L-DAP) to meso-diaminopimelate (meso-DAP), a precursor of L-lysine and an essential component of the bacterial peptidoglycan. This chain is Diaminopimelate epimerase, found in Pseudomonas fluorescens (strain Pf0-1).